A 99-amino-acid chain; its full sequence is UPF0125 protein PM0166 (99 aa).

This sequence belongs to the UPF0125 (RnfH) family.

This Pasteurella multocida (strain Pm70) protein is UPF0125 protein PM0166.